Consider the following 419-residue polypeptide: S-adenosylmethionine synthase (419 aa).

Histidine 15 contacts ATP. Aspartate 17 serves as a coordination point for Mg(2+). Glutamate 43 contributes to the K(+) binding site. Residues glutamate 56 and glutamine 99 each contribute to the L-methionine site. The segment at 99 to 109 (QSPEIAQGVSC) is flexible loop. ATP is bound by residues 173-175 (DGK), 253-254 (RF), aspartate 262, 268-269 (RK), alanine 285, and lysine 289. Residue aspartate 262 coordinates L-methionine. Lysine 293 lines the L-methionine pocket.

The protein belongs to the AdoMet synthase family. In terms of assembly, homotetramer; dimer of dimers. The cofactor is Mg(2+). K(+) is required as a cofactor.

It is found in the cytoplasm. The enzyme catalyses L-methionine + ATP + H2O = S-adenosyl-L-methionine + phosphate + diphosphate. Its pathway is amino-acid biosynthesis; S-adenosyl-L-methionine biosynthesis; S-adenosyl-L-methionine from L-methionine: step 1/1. Catalyzes the formation of S-adenosylmethionine (AdoMet) from methionine and ATP. The overall synthetic reaction is composed of two sequential steps, AdoMet formation and the subsequent tripolyphosphate hydrolysis which occurs prior to release of AdoMet from the enzyme. The polypeptide is S-adenosylmethionine synthase (Gloeobacter violaceus (strain ATCC 29082 / PCC 7421)).